Consider the following 218-residue polypeptide: Small ribosomal subunit protein mS34 (218 aa).

Belongs to the mitochondrion-specific ribosomal protein mS34 family. In terms of assembly, component of the mitochondrial ribosome small subunit (28S) which comprises a 12S rRNA and about 30 distinct proteins. In terms of tissue distribution, widely expressed (at protein liver).

The protein resides in the mitochondrion. In terms of biological role, required for mitochondrial translation, plays a role in maintaining the stability of the small ribosomal subunit and the 12S rRNA that are required for mitoribosome formation. The sequence is that of Small ribosomal subunit protein mS34 (Mrps34) from Mus musculus (Mouse).